A 148-amino-acid polypeptide reads, in one-letter code: Cystatin-D (148 aa).

Positions 1 to 33 (MASLLSPSMPVLAAVALTLTLAVIPEASTNAEA) are cleaved as a signal peptide. The Cystatin kininogen-type domain maps to 36–148 (VVLGGVEPAD…SMTNFNCYNF (113 aa)). 2 disulfides stabilise this stretch: C101–C111 and C125–C145.

This sequence belongs to the cystatin family. In cartilage, expressed mainly in mature chondrocytes including prehypertrophic and hypertrophic cells (at protein level). Expressed exclusively in cartilage.

The protein localises to the cytoplasm. It is found in the cytosol. May play a role in the last steps of the chondrocyte differentiation pathway as an inducer of maturation. Induces chondrocyte calcification during endochondral ossification by playing a role in the transcriptional inhibition of ENPP1, a generator of pyrophosphate which inhibits calcification. Possibly impairs the binding of a transcription factor to the ENPP1 promoter. Unlike other cystatins, does not have thiol protease inhibitor activity. This chain is Cystatin-D, found in Mus musculus (Mouse).